A 462-amino-acid polypeptide reads, in one-letter code: Centrosomal protein of 55 kDa (462 aa).

Positions 1–11 (MSSRSPKDLIK) are enriched in basic and acidic residues. A disordered region spans residues 1–26 (MSSRSPKDLIKSKWGSRPSSSKSDTA). Positions 12–23 (SKWGSRPSSSKS) are enriched in low complexity. A coiled-coil region spans residues 50-400 (KMAEKGRSRL…TQLESLKQLH (351 aa)). A phosphoserine mark is found at S96 and S99. The interval 157-235 (ANCFNSSMNS…EGYLQVEKQK (79 aa)) is interaction with TSG101. Positions 160 to 214 (FNSSMNSIHEKEMQLKDALEKNQQWLVYDQQREAYVKGLLAKIFELEKRTETAAA) are interaction with PDCD6IP. The segment at 354 to 462 (QMQACTLDFE…LLVHVEYCMK (109 aa)) is required for localization to the interphase centrosome and to the midbody during cytokinesis. Residues 410-430 (PLQREPESRVKATSPKSPSAA) form a disordered region. Residues S423, S426, and S428 each carry the phosphoserine modification. Residue S434 is modified to Phosphoserine; by PLK1.

In terms of assembly, homodimer. Interacts (phosphorylated on Ser-423 and Ser-426) with PLK1; the interaction is indirect via the MTMR3:MTMR4 heterooligomer, occurs during early mitosis, regulates the phosphorylation of CEP55 by PLK1 and its recruitment to the midbody where it can mediate cell abscission. Interacts with AKAP9/CG-NAP; the interaction occurs in interphase and is lost upon mitotic entry. Interacts with PCNT/Kendrin; the interaction occurs in interphase and is lost upon mitotic entry. Directly interacts with PDCD6IP; this interaction is required for PDCD6IP targeting to the midbody; CEP55 binds PDCD6IP in a 2:1 stoichiometry; PDCD6IP competes with TSG101 for the same binding site. Interacts with TSG101; TSG101 competes with PDCD6IP for the same binding site; interaction is required for cytokinesis. Interacts with MVB12A, VPS37B, VPS37C and VPS28. In terms of processing, there is a hierachy of phosphorylation, where both Ser-423 and Ser-426 are phosphorylated at the onset of mitosis, prior to Ser-434. Phosphorylation at Ser-423 and Ser-426 is required for dissociation from the centrosome at the G2/M boundary. Phosphorylation at the 3 sites, Ser-423, Ser-426 and Ser-434, is required for protein function at the final stages of cell division to complete cytokinesis successfully.

The protein localises to the cytoplasm. Its subcellular location is the cytoskeleton. It localises to the microtubule organizing center. It is found in the centrosome. The protein resides in the centriole. The protein localises to the cleavage furrow. Its subcellular location is the midbody. It localises to the midbody ring. Its function is as follows. Plays a role in mitotic exit and cytokinesis. Recruits PDCD6IP and TSG101 to midbody during cytokinesis. Required for successful completion of cytokinesis. Not required for microtubule nucleation. Plays a role in the development of the brain and kidney. This chain is Centrosomal protein of 55 kDa, found in Mus musculus (Mouse).